The sequence spans 333 residues: Methylosome protein WDR77 (333 aa).

7 WD repeats span residues 16–59, 68–106, 113–152, 155–195, 199–240, 243–283, and 285–328; these read CMEV…GAPN, QTEAGVTDVAWVSEKGILVASDSGAVELWEILEKESLLV, EHDDIVKTLSVFSDGTQAVSGGKDFSVKVWDLSQKAVLKS, AHSS…PATR, CASD…SAQT, VHSQ…VFRD, and SHRD…NLIA.

In terms of assembly, heterotetramer; dimer of heterodimer with prmt5. Interacts with histone h2a and h4 and with nucleoplasmin. Detected in egg (at protein level).

It localises to the cytoplasm. It is found in the nucleus. Its function is as follows. Non-catalytic component of the 20S prmt5-containing methyltransferase complex, which modifies specific arginines to dimethylarginines in several spliceosomal Sm proteins and histones. Required for normal prmt5 methyltransferase activity. The polypeptide is Methylosome protein WDR77 (Xenopus laevis (African clawed frog)).